The chain runs to 362 residues: Chorismate synthase (362 aa).

Positions 48 and 54 each coordinate NADP(+). Residues 125 to 127 (RSS), 237 to 238 (NA), Gly-277, 292 to 296 (KPTSS), and Arg-318 contribute to the FMN site.

This sequence belongs to the chorismate synthase family. Homotetramer. FMNH2 serves as cofactor.

The catalysed reaction is 5-O-(1-carboxyvinyl)-3-phosphoshikimate = chorismate + phosphate. It participates in metabolic intermediate biosynthesis; chorismate biosynthesis; chorismate from D-erythrose 4-phosphate and phosphoenolpyruvate: step 7/7. Functionally, catalyzes the anti-1,4-elimination of the C-3 phosphate and the C-6 proR hydrogen from 5-enolpyruvylshikimate-3-phosphate (EPSP) to yield chorismate, which is the branch point compound that serves as the starting substrate for the three terminal pathways of aromatic amino acid biosynthesis. This reaction introduces a second double bond into the aromatic ring system. The sequence is that of Chorismate synthase from Idiomarina loihiensis (strain ATCC BAA-735 / DSM 15497 / L2-TR).